A 141-amino-acid polypeptide reads, in one-letter code: MLNAEDKKLIQQAWEKAASHQQEFGAEALVRMFTAYPQTKTYFPHFDLSPGSDQIRGHGKKVLGALSNAVKNVDNLSQAMSELSNLHAYNLRVDPVNFKLLSQCIEVVLAVHMGKDYTPEVHAAFDKFLSAVSAVLAEKYR.

Residues M1–R141 form the Globin domain. Positions 58 and 87 each coordinate heme b.

The protein belongs to the globin family. As to quaternary structure, heterotetramer of two alpha-D chains and two beta chains. In terms of tissue distribution, red blood cells.

Functionally, involved in oxygen transport from the lung to the various peripheral tissues. This is Hemoglobin subunit alpha-D (HBAD) from Phasianus colchicus colchicus (Black-necked pheasant).